Consider the following 507-residue polypeptide: Histidine ammonia-lyase (507 aa).

The 5-imidazolinone (Ala-Gly) cross-link spans 141–143 (ASG). 2,3-didehydroalanine (Ser) is present on Ser-142.

Belongs to the PAL/histidase family. Contains an active site 4-methylidene-imidazol-5-one (MIO), which is formed autocatalytically by cyclization and dehydration of residues Ala-Ser-Gly.

The protein localises to the cytoplasm. It catalyses the reaction L-histidine = trans-urocanate + NH4(+). Its pathway is amino-acid degradation; L-histidine degradation into L-glutamate; N-formimidoyl-L-glutamate from L-histidine: step 1/3. The chain is Histidine ammonia-lyase from Cereibacter sphaeroides (strain KD131 / KCTC 12085) (Rhodobacter sphaeroides).